The sequence spans 355 residues: Glucose-6-phosphatase 2 (355 aa).

Residues 1 to 24 are Lumenal-facing; it reads MDFLHRSGVLIIHHLQEDYRTYYG. The helical transmembrane segment at 25-45 threads the bilayer; it reads FLNFMSNVGDPRNIFSIYFPL. At 46 to 56 the chain is on the cytoplasmic side; sequence WFQLNQNVGTK. The chain crosses the membrane as a helical span at residues 57–77; sequence MIWVAVIGDWFNLIFKWILFG. The Lumenal segment spans residues 78–115; the sequence is HRPYWWIQETEIYPNHSSPCLEQFPTTCETGPGSPSGH. Arg-79 serves as a coordination point for substrate. Residue Asn-92 is glycosylated (N-linked (GlcNAc...) asparagine). His-115 acts as the Proton donor in catalysis. A helical transmembrane segment spans residues 116–136; it reads AMGSSCVWYVMVTAALSYTIS. The Cytoplasmic portion of the chain corresponds to 137–146; it reads RMEESSVTLH. A helical transmembrane segment spans residues 147-167; that stretch reads RLTWSFLWSVFWLIQISVCIS. Position 168 (Arg-168) is a topological domain, lumenal. Arg-168 provides a ligand contact to substrate. A helical transmembrane segment spans residues 169 to 189; sequence VFIATHFPHQVILGVIGGMLV. The active-site Nucleophile is the His-174. Residues 190–211 are Cytoplasmic-facing; sequence AEAFEHTPGVHMASLSVYLKTN. The helical transmembrane segment at 212-232 threads the bilayer; sequence VFLFLFALGFYLLLRLFGIDL. At 233–252 the chain is on the lumenal side; that stretch reads LWSVPIAKKWCANPDWIHID. A helical membrane pass occupies residues 253 to 273; the sequence is STPFAGLVRNLGVLFGLGFAI. Residues 274–290 lie on the Cytoplasmic side of the membrane; it reads NSEMFLRSCQGENGTKP. Residues 291–307 form a helical membrane-spanning segment; it reads SFRLLCALTSLTTMQLY. Residues 308–318 are Lumenal-facing; sequence RFIKIPTHAEP. A helical membrane pass occupies residues 319–339; sequence LFYLLSFCKSASIPLMVVALI. The Cytoplasmic segment spans residues 340–355; that stretch reads PYCVHMLMRPGDKKTK. Positions 352-355 match the Prevents secretion from ER motif; the sequence is KKTK.

This sequence belongs to the glucose-6-phosphatase family. In terms of processing, N-glycosylated; the non-glycosylated form is more unstable and is degraded through the proteasome. As to expression, specifically expressed in pancreatic islet cells, in particular those of beta-cell origin. Not detected in testis, kidney, muscle, liver, lung, spleen, brain, pituitary, gastric fundus or heart.

The protein localises to the endoplasmic reticulum membrane. It carries out the reaction D-glucose 6-phosphate + H2O = D-glucose + phosphate. The protein operates within carbohydrate biosynthesis; gluconeogenesis. Functionally, may hydrolyze glucose-6-phosphate to glucose in the endoplasmic reticulum. May be responsible for glucose production through glycogenolysis and gluconeogenesis. The polypeptide is Glucose-6-phosphatase 2 (G6pc2) (Mus musculus (Mouse)).